A 202-amino-acid chain; its full sequence is Probable thymidylate kinase (202 aa).

An ATP-binding site is contributed by 13–20; sequence GIDGSGKT.

Belongs to the thymidylate kinase family.

It catalyses the reaction dTMP + ATP = dTDP + ADP. The sequence is that of Probable thymidylate kinase from Picrophilus torridus (strain ATCC 700027 / DSM 9790 / JCM 10055 / NBRC 100828 / KAW 2/3).